The chain runs to 427 residues: Peptidase B (427 aa).

Mn(2+) is bound by residues K195 and D200. The active site involves K207. Residues D218, D277, and E279 each coordinate Mn(2+). The active site involves R281.

The protein belongs to the peptidase M17 family. Homohexamer. Mn(2+) is required as a cofactor.

The protein resides in the cytoplasm. It catalyses the reaction Release of an N-terminal amino acid, Xaa, from a peptide or arylamide. Xaa is preferably Glu or Asp but may be other amino acids, including Leu, Met, His, Cys and Gln.. Probably plays an important role in intracellular peptide degradation. The sequence is that of Peptidase B from Shigella boydii serotype 18 (strain CDC 3083-94 / BS512).